Reading from the N-terminus, the 310-residue chain is Ribosomal RNA small subunit methyltransferase H (310 aa).

Residues 33 to 35 (GGH), aspartate 52, phenylalanine 79, aspartate 98, and glutamine 105 contribute to the S-adenosyl-L-methionine site.

Belongs to the methyltransferase superfamily. RsmH family.

Its subcellular location is the cytoplasm. The enzyme catalyses cytidine(1402) in 16S rRNA + S-adenosyl-L-methionine = N(4)-methylcytidine(1402) in 16S rRNA + S-adenosyl-L-homocysteine + H(+). In terms of biological role, specifically methylates the N4 position of cytidine in position 1402 (C1402) of 16S rRNA. This Campylobacter jejuni subsp. jejuni serotype O:6 (strain 81116 / NCTC 11828) protein is Ribosomal RNA small subunit methyltransferase H.